The following is a 96-amino-acid chain: Citrate lyase acyl carrier protein (96 aa).

S14 is subject to O-(phosphoribosyl dephospho-coenzyme A)serine.

It belongs to the CitD family. In terms of assembly, oligomer with a subunit composition of (alpha,beta,gamma)6.

The protein localises to the cytoplasm. Its function is as follows. Covalent carrier of the coenzyme of citrate lyase. The sequence is that of Citrate lyase acyl carrier protein from Pectobacterium atrosepticum (strain SCRI 1043 / ATCC BAA-672) (Erwinia carotovora subsp. atroseptica).